Consider the following 335-residue polypeptide: MKKQWIVGTALLMLMTGNAWADGEPPTENILKDQFKKQYHGILKLDAITLKNLDAKGNQATWSAEGDVSSSDDLYTWVGQLADYELLEQTWTKDKPVKFSAMLTSKGTPASGWSVNFYSFQAAASDRGRVVDDIKTNNKYLIVNSEDFNYRFSQLESALNTQKNSIPALEKEVKALDKQMVAAQKAADAYWGKDANGKQMTREDAFKKIHQQRDEFNKQNDSEAFAVKYDKEVYQPAIAACHKQSEECYEVPIQQKRDFDINEQRRQTFLQSQKLSRKLQDDWVTLEKGQYPLTMKVSEINSKKVAILMKIDDINQANERWKKDTEQLRRNGVIK.

This is an uncharacterized protein from Escherichia coli (strain K12).